Consider the following 1320-residue polypeptide: Collagen alpha-1(XX) chain (1320 aa).

The first 25 residues, methionine 1–glycine 25, serve as a signal peptide directing secretion. A Fibronectin type-III 1 domain is found at valine 27 to glutamine 118. One can recognise a VWFA domain in the interval aspartate 177 to leucine 352. Fibronectin type-III domains are found at residues threonine 377–proline 466, proline 467–glycine 556, proline 557–alanine 644, serine 646–alanine 735, and proline 740–alanine 831. Asparagine 433 carries an N-linked (GlcNAc...) asparagine glycan. 2 N-linked (GlcNAc...) asparagine glycosylation sites follow: asparagine 569 and asparagine 604. Positions serine 728–asparagine 752 are disordered. The segment covering proline 733–serine 748 has biased composition (low complexity). N-linked (GlcNAc...) asparagine glycosylation is present at asparagine 771. One can recognise a Laminin G-like domain in the interval glycine 840–aspartate 1035. 2 disordered regions span residues tyrosine 1064–glutamate 1220 and leucine 1291–glutamate 1320. The span at proline 1069–leucine 1080 shows a compositional bias: pro residues. Collagen-like domains follow at residues proline 1069–arginine 1122, glutamine 1125–glycine 1174, and glycine 1165–proline 1221. Over residues proline 1081 to proline 1093 the composition is skewed to low complexity. Over residues glycine 1106–glycine 1115 the composition is skewed to gly residues. The span at glutamine 1140–glutamine 1152 shows a compositional bias: low complexity. Residues isoleucine 1302 to glutamate 1320 are compositionally biased toward polar residues.

The protein localises to the secreted. It localises to the extracellular space. In terms of biological role, probable collagen protein. In Mus musculus (Mouse), this protein is Collagen alpha-1(XX) chain (Col20a1).